We begin with the raw amino-acid sequence, 328 residues long: Tetraacyldisaccharide 4'-kinase (328 aa).

Position 55–62 (55–62) interacts with ATP; that stretch reads TAGGNGKT.

This sequence belongs to the LpxK family.

It carries out the reaction lipid A disaccharide (E. coli) + ATP = lipid IVA (E. coli) + ADP + H(+). It functions in the pathway glycolipid biosynthesis; lipid IV(A) biosynthesis; lipid IV(A) from (3R)-3-hydroxytetradecanoyl-[acyl-carrier-protein] and UDP-N-acetyl-alpha-D-glucosamine: step 6/6. Its function is as follows. Transfers the gamma-phosphate of ATP to the 4'-position of a tetraacyldisaccharide 1-phosphate intermediate (termed DS-1-P) to form tetraacyldisaccharide 1,4'-bis-phosphate (lipid IVA). This Escherichia coli (strain K12) protein is Tetraacyldisaccharide 4'-kinase (lpxK).